The following is a 136-amino-acid chain: Probable flagellum biosynthesis repressor protein FlbT 2 (136 aa).

Belongs to the FlbT family.

Has a post-transcriptional repressor function in flagellum biogenesis. Associates with the 5'-UTR of fljK mRNA and promotes its degradation. This Bradyrhizobium diazoefficiens (strain JCM 10833 / BCRC 13528 / IAM 13628 / NBRC 14792 / USDA 110) protein is Probable flagellum biosynthesis repressor protein FlbT 2.